The sequence spans 149 residues: Large ribosomal subunit protein bL9 (149 aa).

The protein belongs to the bacterial ribosomal protein bL9 family.

In terms of biological role, binds to the 23S rRNA. In Teredinibacter turnerae (strain ATCC 39867 / T7901), this protein is Large ribosomal subunit protein bL9.